Here is a 449-residue protein sequence, read N- to C-terminus: Glucose-6-phosphate isomerase (449 aa).

The Proton donor role is filled by Glu-291. Active-site residues include His-312 and Lys-426.

The protein belongs to the GPI family.

The protein localises to the cytoplasm. The enzyme catalyses alpha-D-glucose 6-phosphate = beta-D-fructose 6-phosphate. The protein operates within carbohydrate biosynthesis; gluconeogenesis. It functions in the pathway carbohydrate degradation; glycolysis; D-glyceraldehyde 3-phosphate and glycerone phosphate from D-glucose: step 2/4. Functionally, catalyzes the reversible isomerization of glucose-6-phosphate to fructose-6-phosphate. In Streptococcus equi subsp. zooepidemicus (strain MGCS10565), this protein is Glucose-6-phosphate isomerase.